Consider the following 120-residue polypeptide: Large ribosomal subunit protein bL19 (120 aa).

Belongs to the bacterial ribosomal protein bL19 family.

Functionally, this protein is located at the 30S-50S ribosomal subunit interface and may play a role in the structure and function of the aminoacyl-tRNA binding site. In Kocuria rhizophila (strain ATCC 9341 / DSM 348 / NBRC 103217 / DC2201), this protein is Large ribosomal subunit protein bL19.